A 1135-amino-acid chain; its full sequence is DNA-directed RNA polymerase I subunit RPA2 (1135 aa).

Positions 1 to 24 (MDPGSRWRNLPSGPSLKHLTDPSY) are disordered. Residue R180 coordinates RNA. The tract at residues 194 to 208 (IRPKWKTRGPGYTQY) is loop B. The tract at residues 236–247 (LNFIYRKELFFL) is loop A. RNA is bound at residue D367. Fork loop regions lie at residues 439–453 (LRSKTGLGLLQDSGL) and 474–489 (RGADFAKMRTTTVRRL). D755 provides a ligand contact to Mg(2+). Position 890 (K890) interacts with RNA. DNA contacts are provided by R1020 and R1036. The residue at position 1051 (S1051) is a Phosphoserine. Zn(2+)-binding residues include C1070, C1073, C1098, and C1101. Residues 1070–1101 (CVKCGSLLSPLLEKPPPSWSAMRNRKYNCTLC) form a C4-type zinc finger.

This sequence belongs to the RNA polymerase beta chain family. In terms of assembly, component of the RNA polymerase I (Pol I) complex consisting of 13 subunits: a ten-subunit catalytic core composed of POLR1A/RPA1, POLR1B/RPA2, POLR1C/RPAC1, POLR1D/RPAC2, POLR1H/RPA12, POLR2E/RPABC1, POLR2F/RPABC2, POLR2H/RPABC3, POLR2K/RPABC4 and POLR2L/RPABC5; a mobile stalk subunit POLR1F/RPA43 protruding from the core and additional subunits homologous to general transcription factors POLR1E/RPA49 and POLR1G/RPA34. Part of Pol I pre-initiation complex (PIC), in which Pol I core assembles with RRN3 and promoter-bound UTBF and SL1/TIF-IB complex. It depends on Mg(2+) as a cofactor.

It localises to the nucleus. It is found in the nucleolus. The protein resides in the chromosome. The enzyme catalyses RNA(n) + a ribonucleoside 5'-triphosphate = RNA(n+1) + diphosphate. In terms of biological role, catalytic core component of RNA polymerase I (Pol I), a DNA-dependent RNA polymerase which synthesizes ribosomal RNA precursors using the four ribonucleoside triphosphates as substrates. Transcribes 47S pre-rRNAs from multicopy rRNA gene clusters, giving rise to 5.8S, 18S and 28S ribosomal RNAs. Pol I-mediated transcription cycle proceeds through transcription initiation, transcription elongation and transcription termination stages. During transcription initiation, Pol I pre-initiation complex (PIC) is recruited by the selectivity factor 1 (SL1/TIF-IB) complex bound to the core promoter that precedes an rDNA repeat unit. The PIC assembly bends the promoter favoring the formation of the transcription bubble and promoter escape. Once the polymerase has escaped from the promoter it enters the elongation phase during which RNA is actively polymerized, based on complementarity with the template DNA strand. Highly processive, assembles in structures referred to as 'Miller trees' where many elongating Pol I complexes queue and transcribe the same rDNA coding regions. At terminator sequences downstream of the rDNA gene, PTRF interacts with Pol I and halts Pol I transcription leading to the release of the RNA transcript and polymerase from the DNA. Forms Pol I active center together with the largest subunit POLR1A/RPA1. Appends one nucleotide at a time to the 3' end of the nascent RNA, with POLR1A/RPA1 contributing a Mg(2+)-coordinating DxDGD motif, and POLR1B/RPA2 participating in the coordination of a second Mg(2+) ion and providing lysine residues believed to facilitate Watson-Crick base pairing between the incoming nucleotide and the template base. Typically, Mg(2+) ions direct a 5' nucleoside triphosphate to form a phosphodiester bond with the 3' hydroxyl of the preceding nucleotide of the nascent RNA, with the elimination of pyrophosphate. Has proofreading activity: Pauses and backtracks to allow the cleavage of a missincorporated nucleotide via POLR1H/RPA12. High Pol I processivity is associated with decreased transcription fidelity. This chain is DNA-directed RNA polymerase I subunit RPA2, found in Homo sapiens (Human).